Reading from the N-terminus, the 528-residue chain is Folylpolyglutamate synthase (528 aa).

ATP is bound at residue 104–107 (GKGG). Mg(2+)-binding residues include Ser134, Glu208, and His236. ATP contacts are provided by Arg351 and Asp365.

It belongs to the folylpolyglutamate synthase family. Requires a monovalent cation as cofactor.

It localises to the mitochondrion inner membrane. Its subcellular location is the mitochondrion matrix. The protein localises to the cytoplasm. It carries out the reaction (6S)-5,6,7,8-tetrahydrofolyl-(gamma-L-Glu)(n) + L-glutamate + ATP = (6S)-5,6,7,8-tetrahydrofolyl-(gamma-L-Glu)(n+1) + ADP + phosphate + H(+). It participates in cofactor biosynthesis; tetrahydrofolylpolyglutamate biosynthesis. Catalyzes conversion of folates to polyglutamate derivatives allowing concentration of folate compounds in the cell and the intracellular retention of these cofactors, which are important substrates for most of the folate-dependent enzymes that are involved in one-carbon transfer reactions involved in purine, pyrimidine and amino acid synthesis. This is Folylpolyglutamate synthase (met-6) from Neurospora crassa (strain ATCC 24698 / 74-OR23-1A / CBS 708.71 / DSM 1257 / FGSC 987).